The chain runs to 1026 residues: Retinoblastoma-related protein 1 (1026 aa).

Positions 416 to 616 are domain A; it reads TPVSTAMTTA…EKGSSMYNSL (201 aa). Residues 416-872 form a pocket region; that stretch reads TPVSTAMTTA…NEVFIPSVKP (457 aa). Residues 617–737 form a spacer region; it reads AVARPALSVE…PGGGGETCAE (121 aa). The disordered stretch occupies residues 656-680; it reads PVPSLPKPEPMSAQNGDPRSPKRPC. Residues 738-872 are domain B; it reads TGISVFFSKI…NEVFIPSVKP (135 aa). The segment at 1007 to 1026 is disordered; that stretch reads QNGSSASSSGAPLKSEQPDS.

The protein belongs to the retinoblastoma protein (RB) family.

It localises to the nucleus. Its function is as follows. Regulator of biological processes that recruits a histone deacetylase to control gene transcription. May play a role in the entry into mitosis, negatively regulating the cell proliferation. Formation of stable complexes with geminiviridae replication-associated proteins may create a cellular environment which favors viral DNA replication. The polypeptide is Retinoblastoma-related protein 1 (RBR1) (Pisum sativum (Garden pea)).